A 507-amino-acid polypeptide reads, in one-letter code: ATP synthase subunit alpha, chloroplastic (507 aa).

170–177 (GDRQTGKT) provides a ligand contact to ATP.

This sequence belongs to the ATPase alpha/beta chains family. In terms of assembly, F-type ATPases have 2 components, CF(1) - the catalytic core - and CF(0) - the membrane proton channel. CF(1) has five subunits: alpha(3), beta(3), gamma(1), delta(1), epsilon(1). CF(0) has four main subunits: a, b, b' and c.

It is found in the plastid. The protein resides in the chloroplast thylakoid membrane. It catalyses the reaction ATP + H2O + 4 H(+)(in) = ADP + phosphate + 5 H(+)(out). Its function is as follows. Produces ATP from ADP in the presence of a proton gradient across the membrane. The alpha chain is a regulatory subunit. This chain is ATP synthase subunit alpha, chloroplastic, found in Citrus sinensis (Sweet orange).